The sequence spans 409 residues: Immunity-related GTPase family M protein 1 (409 aa).

Residues 75 to 251 (IPVSIFVTGD…PKLRDTLHKD (177 aa)) form the IRG-type G domain. GTP contacts are provided by residues 84 to 91 (DSGNGMSS), 109 to 113 (TGVVR), and 191 to 193 (KLD). S202 is modified (phosphoserine). Residue 232–234 (SSL) coordinates GTP. K270 is covalently cross-linked (Glycyl lysine isopeptide (Lys-Gly) (interchain with G-Cter in ubiquitin)). Positions 350 to 374 (KLRLMTCAIVNAFFRLLRFLPCVCC) are alpha-K amphipathic helix.

This sequence belongs to the TRAFAC class dynamin-like GTPase superfamily. IRG family. Interacts with ULK1; promoting the coassembly of ULK1 and BECN1. Interacts with BECN1; enhancing BECN1-interacting partners and influencing the composition of the BECN1 complex. Interacts with ATG16L1. Interacts with NOD2; promoting Irgm1 'Lys-63'-linked polyubiquitination, which is required for interactions with the core autophagy factors. Interacts with STX17; promoting STX17 recruitment to autophagosomes. Interacts with ATG8 proteins (GABARAP, GABARAPL1, GABARAPL2, MAP1LC3A, MAP1LC3B and MAP1LC3C); promoting STX17 recruitment to autophagosomes. Interacts with TFEB; promoting association between TFEB and PPP3CB and TFEB dephosphorylation. Interacts with PPP3CB; promoting association between TFEB and PPP3CB and TFEB dephosphorylation. Interacts with NLRP3; preventing NLRP3 inflammasome assembly and promoting SQSTM1/p62-dependent autophagic degradation of NLRP3. Interacts with CGAS; promoting SQSTM1/p62-dependent autophagic degradation of CGAS. Interacts with RIGI/RIG-I; promoting SQSTM1/p62-dependent autophagic degradation of RIGI/RIG-I. Interacts with NOD1; promoting SQSTM1/p62-dependent autophagic degradation of RIGI/RIG-I. Interacts with NOD2; promoting SQSTM1/p62-dependent autophagic degradation of RIGI/RIG-I. Interacts with RIPK2; promoting SQSTM1/p62-dependent autophagic degradation of RIGI/RIG-I. Interacts with PIK3CA. Palmitoylated on C-terminal Cys residues. Palmitoylation, together with the alpha-K amphipathic helix, which binds phosphatidylinositol, mediate binding to membranes. Post-translationally, ubiquitinated via 'Lys-63'-linked polyubiquitination in a NOD2-dependent process. 'Lys-63'-linked polyubiquitination is required for interactions with the core autophagy factors. Ubiquitination at Lys-270 by the DCX(WDR77) complex, also named CLR4(WDR77) complex, in intestinal cells, leading to its degradation by the proteasome. As to expression, expressed in lung and primary macrophages.

The protein resides in the golgi apparatus membrane. The protein localises to the cell membrane. It localises to the cytoplasmic vesicle. It is found in the phagosome membrane. Its subcellular location is the autophagosome membrane. The protein resides in the lysosome membrane. The protein localises to the late endosome membrane. It localises to the mitochondrion membrane. It is found in the lipid droplet. Its subcellular location is the cell projection. The protein resides in the phagocytic cup. It carries out the reaction GTP + H2O = GDP + phosphate + H(+). Functionally, immunity-related GTPase that plays important roles in innate immunity and inflammatory response. Acts as a dynamin-like protein that binds to intracellular membranes and promotes remodeling and trafficking of those membranes. Required for clearance of acute protozoan and bacterial infections by interacting with autophagy and lysosome regulatory proteins, thereby promoting the fusion of phagosomes with lysosomes for efficient degradation of cargo including microbes. Regulates selective autophagy, including xenophagy and mitophagy, both directly and indirectly. Directly regulates autophagy by acting as a molecular adapter that promotes the coassembly of the core autophagy machinery to mediate antimicrobial defense: Irgm1 (1) activates AMPK, which in turn phosphorylates ULK1 and BECN1 to induce autophagy, (2) promotes the coassembly of ULK1 and BECN1, enhancing BECN1-interacting partners and (3) influences the composition of the BECN1 complex, by competing with the negative regulators BCL2 and RUBCN, to trigger autophagy. Also activates autophagy by promoting recruitment of STX17 to autophagosomes. In collaboration with ATG8 proteins, regulate lysosomal biogenesis, a fundamental process for any autophagic pathway, by promoting TFEB dephosphorylation. Also modulates autophagy by assisting with autophagosome formation and preventing lysosomal deacidification. Regulates autophagy by affecting mitochondrial fusion and fission. Also involved in M1 macrophage activation for the production of proinflammatory cytokines. While activating autophagy, acts as a key negative regulator of the inflammatory and interferon responses both by (1) promoting mitophagy and (2) mediating autophagy-dependent degradation of effectors of the inflammatory response. Promotes degradation of damaged and IFNG/IFN-gamma-stressed mitochondria via mitophagy, preventing cytosolic release of ligands that activate inflammation. Negatively regulates interferon-signaling in hematopoietic stem cells, preserving hematopoietic stem cell number and function. Promotes expansion of activated CD4(+) T-cells by inhibiting IFNG/IFN-gamma signaling, thereby preventing Ifng-mediated cell death of CD4(+) T-cells. Acts as a suppressor of inflammation by promoting recruitment of inflammation effectors, such as CGAS, RIGI/RIG-I and NLRP3, to autophagosome membranes, leading to their SQSTM1/p62-dependent autophagic degradation. Also directly inhibits assembly of the NLRP3 inflammasome by preventing the association between NLRP3 and PYCARD. Acts as a negative regulator of antiviral innate immune response by suppressing the RIPK2-dependent pro-inflammatory response: mediates recruitment of RIPosomes, composed of RIPK2 and NOD1 or NOD2, to autophagosome membranes, promoting their SQSTM1/p62-dependent autophagic degradation. The chain is Immunity-related GTPase family M protein 1 from Mus musculus (Mouse).